A 296-amino-acid chain; its full sequence is Aquaporin NIP1-1 (296 aa).

Residue methionine 1 is modified to N-acetylmethionine. 2 consecutive transmembrane segments (helical) span residues 57 to 77 (LIAEFLGTYFLVFTGCASVVV) and 84 to 104 (VVTLPGIAIVWGLTIMVLIYS). Positions 114-116 (NPA) match the NPA 1 motif. 3 consecutive transmembrane segments (helical) span residues 136–156 (VISQVIGSTLAAATLRLLFGL), 180–200 (AFTMEFIVTFYLMFIISGVAT), and 205–225 (IGELAGLAIGSTVLLNVLIAA). Residues 233–235 (NPG) carry the NPA 2 motif. Residues 249–269 (GIWIYLVAPTLGAIAGAWVYN) form a helical membrane-spanning segment. A Phosphoserine modification is found at serine 286.

The protein belongs to the MIP/aquaporin (TC 1.A.8) family. NIP (TC 1.A.8.12) subfamily. Expressed in roots.

It localises to the membrane. Functionally, water channel probably required to promote glycerol permeability and water transport across cell membranes. This is Aquaporin NIP1-1 (NIP1-1) from Arabidopsis thaliana (Mouse-ear cress).